A 523-amino-acid chain; its full sequence is Sporulation protein 23 (523 aa).

In terms of assembly, interacts with SPO1 in meiosis.

Its function is as follows. Regulates expression of PIS1. This Saccharomyces cerevisiae (strain ATCC 204508 / S288c) (Baker's yeast) protein is Sporulation protein 23 (SPO23).